Here is a 447-residue protein sequence, read N- to C-terminus: Exodeoxyribonuclease 7 large subunit (447 aa).

Belongs to the XseA family. In terms of assembly, heterooligomer composed of large and small subunits.

The protein localises to the cytoplasm. The catalysed reaction is Exonucleolytic cleavage in either 5'- to 3'- or 3'- to 5'-direction to yield nucleoside 5'-phosphates.. Functionally, bidirectionally degrades single-stranded DNA into large acid-insoluble oligonucleotides, which are then degraded further into small acid-soluble oligonucleotides. The protein is Exodeoxyribonuclease 7 large subunit of Lactiplantibacillus plantarum (strain ATCC BAA-793 / NCIMB 8826 / WCFS1) (Lactobacillus plantarum).